A 208-amino-acid chain; its full sequence is Putative 3-methyladenine DNA glycosylase (208 aa).

The protein belongs to the DNA glycosylase MPG family.

This chain is Putative 3-methyladenine DNA glycosylase, found in Lactobacillus johnsonii (strain CNCM I-12250 / La1 / NCC 533).